Here is a 349-residue protein sequence, read N- to C-terminus: tRNA pseudouridine synthase D (349 aa).

Position 27 (Phe27) interacts with substrate. Asp80 serves as the catalytic Nucleophile. Asn129 is a substrate binding site. Residues 155-303 (GVPNYFGAQR…VEAARRAMLL (149 aa)) enclose the TRUD domain. Phe329 serves as a coordination point for substrate.

Belongs to the pseudouridine synthase TruD family.

The enzyme catalyses uridine(13) in tRNA = pseudouridine(13) in tRNA. Functionally, responsible for synthesis of pseudouridine from uracil-13 in transfer RNAs. This is tRNA pseudouridine synthase D from Escherichia coli O6:H1 (strain CFT073 / ATCC 700928 / UPEC).